Reading from the N-terminus, the 793-residue chain is Sucrose synthase (793 aa).

The interval 263–742 (MISRILIVSI…ALARVAERYT (480 aa)) is GT-B glycosyltransferase.

This sequence belongs to the glycosyltransferase 1 family. In terms of assembly, homotetramer.

The catalysed reaction is an NDP-alpha-D-glucose + D-fructose = a ribonucleoside 5'-diphosphate + sucrose + H(+). It catalyses the reaction ADP-alpha-D-glucose + D-fructose = sucrose + ADP + H(+). In terms of biological role, catalyzes the reversible conversion of sucrose and a nucleotide disphosphate (NDP) into fructose and NDP-glucose; although the reaction is freely reversible in vitro, the physiological reaction seems to be sucrose cleavage. Unlike characterized plant enzymes prefers ADP as a cosubstrate, whereas plants prefer UDP. The KM for sucrose is 45-fold lower in the presence of ADP than UDP. Its preference for ADP over UDP suggests it may directly link sucrose and glycogen metabolism. The chain is Sucrose synthase from Acidithiobacillus caldus (strain ATCC 51756 / DSM 8584 / KU).